A 413-amino-acid polypeptide reads, in one-letter code: Putative F-box protein At3g23970 (413 aa).

The F-box domain occupies 1–42 (MNIPPELTFEVLVRLPLKSLARFRSVRKEWKLVIDSEFFRDC).

The protein is Putative F-box protein At3g23970 of Arabidopsis thaliana (Mouse-ear cress).